The chain runs to 239 residues: RNA polymerase sigma-35 factor (239 aa).

A propeptide spanning residues 1-27 is cleaved from the precursor; sequence MMKLKFYLVYLWYKVLLKLGIKTDEIY. Positions 86 to 99 match the Polymerase core binding motif; the sequence is DLISIGTIGLIKAV. The H-T-H motif DNA-binding region spans 206–225; that stretch reads QKDVADMLGISQSYISRLEK.

It belongs to the sigma-70 factor family. In terms of processing, proteolytically cleaved in the N-terminus probably by a SpoIIGA homolog to yield the active peptide.

Sigma factors are initiation factors that promote the attachment of RNA polymerase to specific initiation sites and are then released. This sigma factor directs the transcription of crystal protein genes, a sporulation-regulated event. The chain is RNA polymerase sigma-35 factor (sigE) from Bacillus anthracis.